Consider the following 461-residue polypeptide: Cysteine--tRNA ligase (461 aa).

Residue Cys-29 participates in Zn(2+) binding. Residues 31–41 carry the 'HIGH' region motif; it reads PTVYNYAHIGN. Cys-214, His-239, and Glu-243 together coordinate Zn(2+). The short motif at 271–275 is the 'KMSKS' region element; that stretch reads KMSKS. Lys-274 contributes to the ATP binding site.

Belongs to the class-I aminoacyl-tRNA synthetase family. As to quaternary structure, monomer. Zn(2+) serves as cofactor.

The protein resides in the cytoplasm. The catalysed reaction is tRNA(Cys) + L-cysteine + ATP = L-cysteinyl-tRNA(Cys) + AMP + diphosphate. The protein is Cysteine--tRNA ligase of Hyphomonas neptunium (strain ATCC 15444).